A 447-amino-acid polypeptide reads, in one-letter code: Probable glycine dehydrogenase (decarboxylating) subunit 1 (447 aa).

This sequence belongs to the GcvP family. N-terminal subunit subfamily. In terms of assembly, the glycine cleavage system is composed of four proteins: P, T, L and H. In this organism, the P 'protein' is a heterodimer of two subunits.

It carries out the reaction N(6)-[(R)-lipoyl]-L-lysyl-[glycine-cleavage complex H protein] + glycine + H(+) = N(6)-[(R)-S(8)-aminomethyldihydrolipoyl]-L-lysyl-[glycine-cleavage complex H protein] + CO2. In terms of biological role, the glycine cleavage system catalyzes the degradation of glycine. The P protein binds the alpha-amino group of glycine through its pyridoxal phosphate cofactor; CO(2) is released and the remaining methylamine moiety is then transferred to the lipoamide cofactor of the H protein. The polypeptide is Probable glycine dehydrogenase (decarboxylating) subunit 1 (Bacillus mycoides (strain KBAB4) (Bacillus weihenstephanensis)).